The following is a 283-amino-acid chain: Formamidopyrimidine-DNA glycosylase (283 aa).

The Schiff-base intermediate with DNA role is filled by Pro2. The active-site Proton donor is the Glu3. The Proton donor; for beta-elimination activity role is filled by Lys61. 3 residues coordinate DNA: His94, Arg113, and Lys159. Residues 245–279 form an FPG-type zinc finger; it reads DAYGREGESCRRCGAVMRREKFMNRSSFYCPKCQP. The Proton donor; for delta-elimination activity role is filled by Arg269.

It belongs to the FPG family. As to quaternary structure, monomer. Zn(2+) is required as a cofactor.

It catalyses the reaction Hydrolysis of DNA containing ring-opened 7-methylguanine residues, releasing 2,6-diamino-4-hydroxy-5-(N-methyl)formamidopyrimidine.. It carries out the reaction 2'-deoxyribonucleotide-(2'-deoxyribose 5'-phosphate)-2'-deoxyribonucleotide-DNA = a 3'-end 2'-deoxyribonucleotide-(2,3-dehydro-2,3-deoxyribose 5'-phosphate)-DNA + a 5'-end 5'-phospho-2'-deoxyribonucleoside-DNA + H(+). Its function is as follows. Involved in base excision repair of DNA damaged by oxidation or by mutagenic agents. Acts as a DNA glycosylase that recognizes and removes damaged bases. Has a preference for oxidized purines, such as 7,8-dihydro-8-oxoguanine (8-oxoG). Has AP (apurinic/apyrimidinic) lyase activity and introduces nicks in the DNA strand. Cleaves the DNA backbone by beta-delta elimination to generate a single-strand break at the site of the removed base with both 3'- and 5'-phosphates. The chain is Formamidopyrimidine-DNA glycosylase from Mycolicibacterium paratuberculosis (strain ATCC BAA-968 / K-10) (Mycobacterium paratuberculosis).